A 310-amino-acid chain; its full sequence is Methionyl-tRNA formyltransferase (310 aa).

Residue 110–113 (SLLP) participates in (6S)-5,6,7,8-tetrahydrofolate binding.

It belongs to the Fmt family.

It catalyses the reaction L-methionyl-tRNA(fMet) + (6R)-10-formyltetrahydrofolate = N-formyl-L-methionyl-tRNA(fMet) + (6S)-5,6,7,8-tetrahydrofolate + H(+). Functionally, attaches a formyl group to the free amino group of methionyl-tRNA(fMet). The formyl group appears to play a dual role in the initiator identity of N-formylmethionyl-tRNA by promoting its recognition by IF2 and preventing the misappropriation of this tRNA by the elongation apparatus. In Streptomyces avermitilis (strain ATCC 31267 / DSM 46492 / JCM 5070 / NBRC 14893 / NCIMB 12804 / NRRL 8165 / MA-4680), this protein is Methionyl-tRNA formyltransferase.